A 112-amino-acid polypeptide reads, in one-letter code: MGRQVTPIYPRTNGTIQPVNFPIRNMEPPNHSLQSAGFQIPPPDAQFPRYHAAAPHHPRVEAAAPSCLDVARHVESCPICSRIHDTDKTLYVLVIVGLTILCFLLVKRILKL.

The chain crosses the membrane as a helical span at residues 89–106 (TLYVLVIVGLTILCFLLV).

It belongs to the IIV-6 466R family.

Its subcellular location is the membrane. This is an uncharacterized protein from Aedes vexans (Inland floodwater mosquito).